The chain runs to 596 residues: ATP-dependent RNA helicase dbp3 (596 aa).

Positions 1-17 are enriched in basic and acidic residues; that stretch reads MPKRTLEDTELNPRDNY. 2 disordered regions span residues 1–87 and 115–139; these read MPKR…ESTS and EEKV…QNGT. Residues 21–30 show a composition bias toward basic residues; that stretch reads SSKKSRKEKR. Residues 47-120 adopt a coiled-coil conformation; the sequence is IDIEVESKEA…KEGKEEKVDI (74 aa). Residues 123-139 are compositionally biased toward polar residues; the sequence is STDSATPISVAPQQNGT. The Q motif motif lies at 180 to 207; sequence IKFDYLPITDSAQRAPFKDFKAPTPIQA. A Helicase ATP-binding domain is found at 210–386; sequence WPFLLAGRDV…STFMTSPVKI (177 aa). Residue 223–230 participates in ATP binding; sequence AETGSGKT. The DEAD box motif lies at 332 to 335; sequence DEAD. A Helicase C-terminal domain is found at 417–566; that stretch reads RLMQLLKQYQ…PVPDELLKFG (150 aa).

This sequence belongs to the DEAD box helicase family. DDX5/DBP2 subfamily.

It localises to the nucleus. The protein localises to the nucleolus. The catalysed reaction is ATP + H2O = ADP + phosphate + H(+). Its function is as follows. ATP-dependent RNA helicase required for 60S ribosomal subunit synthesis. Involved in efficient pre-rRNA processing, predominantly at site A3, which is necessary for the normal formation of 25S and 5.8S rRNAs. The chain is ATP-dependent RNA helicase dbp3 (dbp3) from Sclerotinia sclerotiorum (strain ATCC 18683 / 1980 / Ss-1) (White mold).